Here is a 454-residue protein sequence, read N- to C-terminus: Tubulin beta-3 chain (454 aa).

Residues Q11, E75, S144, G148, T149, G150, N210, and N232 each coordinate GTP. E75 lines the Mg(2+) pocket. The disordered stretch occupies residues 435–454 (TADDEFDPEVNQEEVEGDCI).

Belongs to the tubulin family. As to quaternary structure, dimer of alpha and beta chains. A typical microtubule is a hollow water-filled tube with an outer diameter of 25 nm and an inner diameter of 15 nM. Alpha-beta heterodimers associate head-to-tail to form protofilaments running lengthwise along the microtubule wall with the beta-tubulin subunit facing the microtubule plus end conferring a structural polarity. Microtubules usually have 13 protofilaments but different protofilament numbers can be found in some organisms and specialized cells. The cofactor is Mg(2+).

It is found in the cytoplasm. It localises to the cytoskeleton. Tubulin is the major constituent of microtubules, a cylinder consisting of laterally associated linear protofilaments composed of alpha- and beta-tubulin heterodimers. Microtubules grow by the addition of GTP-tubulin dimers to the microtubule end, where a stabilizing cap forms. Below the cap, tubulin dimers are in GDP-bound state, owing to GTPase activity of alpha-tubulin. The protein is Tubulin beta-3 chain (betaTub60D) of Drosophila melanogaster (Fruit fly).